We begin with the raw amino-acid sequence, 39 residues long: Photosystem II reaction center protein L (39 aa).

Residues 18–38 form a helical membrane-spanning segment; it reads SLYLGLLLVFVTGVLFSSYFF.

This sequence belongs to the PsbL family. As to quaternary structure, PSII is composed of 1 copy each of membrane proteins PsbA, PsbB, PsbC, PsbD, PsbE, PsbF, PsbH, PsbI, PsbJ, PsbK, PsbL, PsbM, PsbT, PsbX, PsbY, PsbZ, Psb30/Ycf12, peripheral proteins PsbO, CyanoQ (PsbQ), PsbU, PsbV and a large number of cofactors. It forms dimeric complexes.

Its subcellular location is the cellular thylakoid membrane. Its function is as follows. One of the components of the core complex of photosystem II (PSII). PSII is a light-driven water:plastoquinone oxidoreductase that uses light energy to abstract electrons from H(2)O, generating O(2) and a proton gradient subsequently used for ATP formation. It consists of a core antenna complex that captures photons, and an electron transfer chain that converts photonic excitation into a charge separation. This subunit is found at the monomer-monomer interface and is required for correct PSII assembly and/or dimerization. This is Photosystem II reaction center protein L from Synechococcus sp. (strain RCC307).